We begin with the raw amino-acid sequence, 496 residues long: Geranylhydroquinone 3''-hydroxylase CYP76B74 (496 aa).

A helical transmembrane segment spans residues 3-23; sequence YTTILVGFLIGFVLFKALTRK. Heme is bound at residue cysteine 436.

The protein belongs to the cytochrome P450 family. Requires heme as cofactor.

The protein resides in the endoplasmic reticulum membrane. It catalyses the reaction (2E)-geranylhydroquinone + reduced [NADPH--hemoprotein reductase] + O2 = (2Z)-3''-hydroxygeranylhydroquinone + oxidized [NADPH--hemoprotein reductase] + H2O + H(+). In terms of biological role, hydroxylase involved in the biosynthesis pathway of the red naphthoquinone pigment shikonin. Catalyzes the key step C-3''-hydroxylation of the prenylated phenolic intermediate geranylhydroquinone to form 3''-hydroxygeranylhydroquinone. The protein is Geranylhydroquinone 3''-hydroxylase CYP76B74 of Arnebia euchroma (Pink arnebia).